Here is a 457-residue protein sequence, read N- to C-terminus: Glutamyl-tRNA reductase (457 aa).

Substrate is bound by residues 49–52 (TCNR), serine 109, 114–116 (ETQ), and glutamine 120. Residue cysteine 50 is the Nucleophile of the active site. NADP(+) is bound at residue 189-194 (GAGKMG).

Belongs to the glutamyl-tRNA reductase family. As to quaternary structure, homodimer.

The catalysed reaction is (S)-4-amino-5-oxopentanoate + tRNA(Glu) + NADP(+) = L-glutamyl-tRNA(Glu) + NADPH + H(+). It functions in the pathway porphyrin-containing compound metabolism; protoporphyrin-IX biosynthesis; 5-aminolevulinate from L-glutamyl-tRNA(Glu): step 1/2. Functionally, catalyzes the NADPH-dependent reduction of glutamyl-tRNA(Glu) to glutamate 1-semialdehyde (GSA). This chain is Glutamyl-tRNA reductase, found in Oceanobacillus iheyensis (strain DSM 14371 / CIP 107618 / JCM 11309 / KCTC 3954 / HTE831).